Consider the following 414-residue polypeptide: Zinc metalloproteinase-disintegrin-like batroxstatin-3 (414 aa).

N-linked (GlcNAc...) asparagine glycosylation is found at asparagine 7 and asparagine 70. Residues 10 to 204 (KYIKLVIVAD…HTPQCILNEP (195 aa)) form the Peptidase M12B domain. Cystine bridges form between cysteine 121–cysteine 199, cysteine 161–cysteine 183, and cysteine 163–cysteine 168. Position 146 (histidine 146) interacts with Zn(2+). Glutamate 147 is a catalytic residue. Positions 150 and 156 each coordinate Zn(2+). In terms of domain architecture, Disintegrin spans 212–298 (PEVCGNYLLE…HCPTDRFHRN (87 aa)). Valine 214, asparagine 217, glutamate 221, glutamate 224, and aspartate 227 together coordinate Ca(2+). 14 disulfides stabilise this stretch: cysteine 215–cysteine 244, cysteine 226–cysteine 239, cysteine 228–cysteine 234, cysteine 238–cysteine 261, cysteine 252–cysteine 258, cysteine 257–cysteine 283, cysteine 270–cysteine 290, cysteine 277–cysteine 309, cysteine 302–cysteine 314, cysteine 321–cysteine 371, cysteine 336–cysteine 381, cysteine 349–cysteine 359, cysteine 366–cysteine 403, and cysteine 397–cysteine 408. The D/ECD-tripeptide motif lies at 276-278 (ECD). Positions 278, 281, 293, and 294 each coordinate Ca(2+).

The protein belongs to the venom metalloproteinase (M12B) family. P-III subfamily. P-IIIa sub-subfamily. As to quaternary structure, monomer. The cofactor is Zn(2+). As to expression, expressed by the venom gland.

It localises to the secreted. Snake venom zinc metalloprotease that induces apoptosis in vascular endothelial cells (VEC), without degrading the extracellular matrix (it cannot cleave collagen) or inhibiting adhesion of VEC. Has also fibrinogenolytic and hemorrhagic activities. In Bothrops atrox (Barba amarilla), this protein is Zinc metalloproteinase-disintegrin-like batroxstatin-3.